Consider the following 260-residue polypeptide: Small ribosomal subunit protein uS3 (260 aa).

Residues leucine 39–glutamine 114 enclose the KH type-2 domain. The tract at residues glutamate 219–glycine 260 is disordered. Basic and acidic residues-rich tracts occupy residues threonine 227 to arginine 243 and glutamine 251 to glycine 260.

It belongs to the universal ribosomal protein uS3 family. In terms of assembly, part of the 30S ribosomal subunit. Forms a tight complex with proteins S10 and S14.

Its function is as follows. Binds the lower part of the 30S subunit head. Binds mRNA in the 70S ribosome, positioning it for translation. The chain is Small ribosomal subunit protein uS3 from Trichormus variabilis (strain ATCC 29413 / PCC 7937) (Anabaena variabilis).